The following is a 1343-amino-acid chain: DNA-directed RNA polymerase subunit beta (1343 aa).

The protein belongs to the RNA polymerase beta chain family. In terms of assembly, the RNAP catalytic core consists of 2 alpha, 1 beta, 1 beta' and 1 omega subunit. When a sigma factor is associated with the core the holoenzyme is formed, which can initiate transcription.

The enzyme catalyses RNA(n) + a ribonucleoside 5'-triphosphate = RNA(n+1) + diphosphate. Its function is as follows. DNA-dependent RNA polymerase catalyzes the transcription of DNA into RNA using the four ribonucleoside triphosphates as substrates. This Haemophilus influenzae (strain PittGG) protein is DNA-directed RNA polymerase subunit beta.